Here is a 342-residue protein sequence, read N- to C-terminus: Aquaporin-8 (342 aa).

3 consecutive transmembrane segments (helical) span residues 55 to 75 (FLAVFVLMVFIEGSAATAIFT), 98 to 118 (VAGGVSGAFLNPAVALAFAVL), and 126 to 146 (CIFYMISQYLAAFVASCTMFA). The NPA 1 motif lies at 108–110 (NPA). N-linked (GlcNAc...) asparagine glycosylation occurs at asparagine 166. A run of 2 helical transmembrane segments spans residues 184–204 (TAFADQVFCTAILLIVVLAMC) and 215–235 (FLPIAIGLLIITISCTLSYNA). Residues 240-242 (NPS) carry the NPA 2 motif. A helical membrane pass occupies residues 266-286 (YTWFFVPVLGSHCGAIIGGAI). Over residues 302–327 (TNSVSSMSYNEDNSTLTKRKQVSNIV) the composition is skewed to polar residues. The tract at residues 302-342 (TNSVSSMSYNEDNSTLTKRKQVSNIVHDSKGAKGSSTAPVN) is disordered. The N-linked (GlcNAc...) asparagine glycan is linked to asparagine 314.

It belongs to the MIP/aquaporin (TC 1.A.8) family.

Its subcellular location is the cell membrane. Functionally, aquaglyceroporin that may modulate the water content and osmolytes during anhydrobiosis. This chain is Aquaporin-8, found in Milnesium tardigradum (Water bear).